A 66-amino-acid polypeptide reads, in one-letter code: Large ribosomal subunit protein bL33c (66 aa).

The protein belongs to the bacterial ribosomal protein bL33 family.

It localises to the plastid. The protein localises to the chloroplast. This chain is Large ribosomal subunit protein bL33c, found in Platanus occidentalis (Sycamore).